Here is a 368-residue protein sequence, read N- to C-terminus: Transaldolase (368 aa).

K140 serves as the catalytic Schiff-base intermediate with substrate.

This sequence belongs to the transaldolase family. Type 2 subfamily.

Its subcellular location is the cytoplasm. The enzyme catalyses D-sedoheptulose 7-phosphate + D-glyceraldehyde 3-phosphate = D-erythrose 4-phosphate + beta-D-fructose 6-phosphate. The protein operates within carbohydrate degradation; pentose phosphate pathway; D-glyceraldehyde 3-phosphate and beta-D-fructose 6-phosphate from D-ribose 5-phosphate and D-xylulose 5-phosphate (non-oxidative stage): step 2/3. In terms of biological role, transaldolase is important for the balance of metabolites in the pentose-phosphate pathway. This chain is Transaldolase, found in Thermobifida fusca (strain YX).